A 60-amino-acid chain; its full sequence is Large ribosomal subunit protein bL32 (60 aa).

The segment at 1–23 (MAVPARHTSKAKKNKRRTHYKLT) is disordered. The segment covering 7-20 (HTSKAKKNKRRTHY) has biased composition (basic residues).

The protein belongs to the bacterial ribosomal protein bL32 family.

The protein is Large ribosomal subunit protein bL32 of Streptococcus equi subsp. equi (strain 4047).